Here is a 462-residue protein sequence, read N- to C-terminus: Argininosuccinate lyase (462 aa).

The protein belongs to the lyase 1 family. Argininosuccinate lyase subfamily.

The protein localises to the cytoplasm. It carries out the reaction 2-(N(omega)-L-arginino)succinate = fumarate + L-arginine. It functions in the pathway amino-acid biosynthesis; L-arginine biosynthesis; L-arginine from L-ornithine and carbamoyl phosphate: step 3/3. This chain is Argininosuccinate lyase, found in Ehrlichia ruminantium (strain Welgevonden).